Consider the following 205-residue polypeptide: MKKIIICFIFVFSINVSFADATSELIDKIKNIHSMTANFNQKLIDGQTNNNLNSKGNMSLKKPQYFKWITTSPNNQEIVSNGTKLWIYDGDLDQLIIKKVSNDIAQFPYLILLSKNTNNINKLFTVTAQDNNSYILKPKNDQMIDSIKIKFTPNNQLEYLEISTSLNQFTKIEFNNVKTDVDISNTSFDFKAPQNTDIIDETKFA.

Positions M1–A19 are cleaved as a signal peptide.

This sequence belongs to the LolA family. In terms of assembly, monomer.

Its subcellular location is the periplasm. Its function is as follows. Participates in the translocation of lipoproteins from the inner membrane to the outer membrane. Only forms a complex with a lipoprotein if the residue after the N-terminal Cys is not an aspartate (The Asp acts as a targeting signal to indicate that the lipoprotein should stay in the inner membrane). This chain is Outer-membrane lipoprotein carrier protein, found in Francisella tularensis subsp. tularensis (strain FSC 198).